A 53-amino-acid polypeptide reads, in one-letter code: MFRWGIIFLVIALIAAALGFGGLAGTAAGAAKIVFVVGIILFLVSLFTGRRRP.

The next 2 membrane-spanning stretches (helical) occupy residues 4-24 (WGII…GGLA) and 30-47 (AAKI…VSLF).

The protein belongs to the UPF0391 family.

The protein resides in the cell membrane. The chain is UPF0391 membrane protein KPK_4780 from Klebsiella pneumoniae (strain 342).